A 60-amino-acid polypeptide reads, in one-letter code: Large ribosomal subunit protein eL37 (60 aa).

Zn(2+) is bound by residues Cys18, Cys21, Cys33, and Cys36. A C4-type zinc finger spans residues Cys18–Cys36.

This sequence belongs to the eukaryotic ribosomal protein eL37 family. It depends on Zn(2+) as a cofactor.

Functionally, binds to the 23S rRNA. This Methanothermobacter thermautotrophicus (strain ATCC 29096 / DSM 1053 / JCM 10044 / NBRC 100330 / Delta H) (Methanobacterium thermoautotrophicum) protein is Large ribosomal subunit protein eL37 (rpl37e).